The following is a 736-amino-acid chain: Myotubularin-related protein 12 (736 aa).

One can recognise a Myotubularin phosphatase domain in the interval 182–558 (YLRSTNPEML…RQLSLPSSAF (377 aa)). The interval 672-691 (SLATQPDHPPPLHHRLPSFG) is disordered.

This sequence belongs to the protein-tyrosine phosphatase family. Non-receptor class myotubularin subfamily. As to quaternary structure, heterodimer with lipid phosphatase mtm1. In skeletal muscles, the interaction stabilizes both mtmr12 and mtm1 protein levels.

It localises to the cytoplasm. The protein resides in the sarcoplasmic reticulum. It is found in the myofibril. The protein localises to the sarcomere. Functionally, acts as an adapter for the myotubularin phosphatase mtm1 to regulate mtm1 protein stability and possibly its intracellular location. By stabilizing mtm1 protein levels, required for skeletal muscle maintenance but not for myogenesis. In skeletal muscle cells, does not regulate mtm1 subcellular localization. This is Myotubularin-related protein 12 (mtmr12) from Danio rerio (Zebrafish).